The chain runs to 298 residues: Pyridoxal 5'-phosphate synthase subunit PdxS (298 aa).

Position 24 (Asp24) interacts with D-ribose 5-phosphate. Catalysis depends on Lys81, which acts as the Schiff-base intermediate with D-ribose 5-phosphate. Gly153 lines the D-ribose 5-phosphate pocket. Arg165 serves as a coordination point for D-glyceraldehyde 3-phosphate. Residues Gly214 and 235-236 (GS) contribute to the D-ribose 5-phosphate site.

Belongs to the PdxS/SNZ family. As to quaternary structure, in the presence of PdxT, forms a dodecamer of heterodimers.

It carries out the reaction aldehydo-D-ribose 5-phosphate + D-glyceraldehyde 3-phosphate + L-glutamine = pyridoxal 5'-phosphate + L-glutamate + phosphate + 3 H2O + H(+). Its pathway is cofactor biosynthesis; pyridoxal 5'-phosphate biosynthesis. Catalyzes the formation of pyridoxal 5'-phosphate from ribose 5-phosphate (RBP), glyceraldehyde 3-phosphate (G3P) and ammonia. The ammonia is provided by the PdxT subunit. Can also use ribulose 5-phosphate and dihydroxyacetone phosphate as substrates, resulting from enzyme-catalyzed isomerization of RBP and G3P, respectively. This is Pyridoxal 5'-phosphate synthase subunit PdxS from Halalkalibacterium halodurans (strain ATCC BAA-125 / DSM 18197 / FERM 7344 / JCM 9153 / C-125) (Bacillus halodurans).